We begin with the raw amino-acid sequence, 185 residues long: Peptidyl-tRNA hydrolase (185 aa).

A tRNA-binding site is contributed by Tyr14. His19 functions as the Proton acceptor in the catalytic mechanism. Positions 65, 67, and 113 each coordinate tRNA.

The protein belongs to the PTH family. In terms of assembly, monomer.

It is found in the cytoplasm. The enzyme catalyses an N-acyl-L-alpha-aminoacyl-tRNA + H2O = an N-acyl-L-amino acid + a tRNA + H(+). Its function is as follows. Hydrolyzes ribosome-free peptidyl-tRNAs (with 1 or more amino acids incorporated), which drop off the ribosome during protein synthesis, or as a result of ribosome stalling. Functionally, catalyzes the release of premature peptidyl moieties from peptidyl-tRNA molecules trapped in stalled 50S ribosomal subunits, and thus maintains levels of free tRNAs and 50S ribosomes. The sequence is that of Peptidyl-tRNA hydrolase from Rickettsia canadensis (strain McKiel).